The chain runs to 156 residues: MSRRREVPKREVIPDARYNDKLVAKFMNCLMVDGKKSLAERVFYGAFDLIEQRTKEDPIKVFKEAVDNVRPTLEVRSRRVGGANYQVPVEVRPVRRQTLAIRWLIGYARSRGEKTMRERLAAELIEASQGRGATIKKRDDTHRMAEANKVFAHYRW.

This sequence belongs to the universal ribosomal protein uS7 family. Part of the 30S ribosomal subunit. Contacts proteins S9 and S11.

One of the primary rRNA binding proteins, it binds directly to 16S rRNA where it nucleates assembly of the head domain of the 30S subunit. Is located at the subunit interface close to the decoding center, probably blocks exit of the E-site tRNA. The protein is Small ribosomal subunit protein uS7 of Magnetococcus marinus (strain ATCC BAA-1437 / JCM 17883 / MC-1).